Consider the following 449-residue polypeptide: Type 3 secretion system ATPase (449 aa).

178–183 serves as a coordination point for ATP; the sequence is GCGKTT.

Belongs to the ATPase alpha/beta chains family. T3SS ATPase subfamily. The core secretion machinery of the T3SS is composed of approximately 20 different proteins, including cytoplasmic components, a base, an export apparatus and a needle. This subunit is part of the cytosolic complex. Forms homododecamers.

It localises to the cytoplasm. It carries out the reaction ATP + H2O + cellular proteinSide 1 = ADP + phosphate + cellular proteinSide 2.. ATPase component of the type III secretion system (T3SS), also called injectisome, which is used to inject bacterial effector proteins into eukaryotic host cells. Acts as a molecular motor to provide the energy that is required for the export of proteins. Required for type III secretion apparatus (T3SA) formation, proper protein secretion, host cell invasion and virulence. May play a critical role in T3SS substrate recognition, disassembly of the effector/chaperone complex and unfolding of the effector in an ATP-dependent manner prior to secretion. The polypeptide is Type 3 secretion system ATPase (Pseudomonas syringae pv. syringae).